The chain runs to 241 residues: Uridylate kinase (241 aa).

Residue 11–14 coordinates ATP; sequence KFSG. An involved in allosteric activation by GTP region spans residues 19–24; it reads GENGFG. Glycine 53 is a UMP binding site. 2 residues coordinate ATP: glycine 54 and arginine 58. UMP is bound by residues aspartate 74 and 135-142; that span reads TGNPFFTT. 3 residues coordinate ATP: threonine 162, tyrosine 168, and aspartate 171.

It belongs to the UMP kinase family. Homohexamer.

It is found in the cytoplasm. The enzyme catalyses UMP + ATP = UDP + ADP. It participates in pyrimidine metabolism; CTP biosynthesis via de novo pathway; UDP from UMP (UMPK route): step 1/1. Allosterically activated by GTP. Inhibited by UTP. In terms of biological role, catalyzes the reversible phosphorylation of UMP to UDP. In Wolinella succinogenes (strain ATCC 29543 / DSM 1740 / CCUG 13145 / JCM 31913 / LMG 7466 / NCTC 11488 / FDC 602W) (Vibrio succinogenes), this protein is Uridylate kinase.